Reading from the N-terminus, the 145-residue chain is Ribosome-binding factor A (145 aa).

Residues 126 to 145 (RDLDTETDAEAGSETTKEED) form a disordered region. Over residues 130–145 (TETDAEAGSETTKEED) the composition is skewed to acidic residues.

This sequence belongs to the RbfA family. As to quaternary structure, monomer. Binds 30S ribosomal subunits, but not 50S ribosomal subunits or 70S ribosomes.

It localises to the cytoplasm. Its function is as follows. One of several proteins that assist in the late maturation steps of the functional core of the 30S ribosomal subunit. Associates with free 30S ribosomal subunits (but not with 30S subunits that are part of 70S ribosomes or polysomes). Required for efficient processing of 16S rRNA. May interact with the 5'-terminal helix region of 16S rRNA. The sequence is that of Ribosome-binding factor A from Azorhizobium caulinodans (strain ATCC 43989 / DSM 5975 / JCM 20966 / LMG 6465 / NBRC 14845 / NCIMB 13405 / ORS 571).